The primary structure comprises 806 residues: Mitogen-activated protein kinase 7 (806 aa).

A disordered region spans residues 1-23 (MAEPLKEEDGEDGSGEPPGRVKA). Ala2 carries the N-acetylalanine modification. A required for cytoplasmic targeting region spans residues 2-77 (AEPLKEEDGE…VVSSARRRLT (76 aa)). The Protein kinase domain maps to 55–347 (YEIIETIGNG…AAAALRHPFL (293 aa)). ATP contacts are provided by residues 61–69 (IGNGAYGVV) and Lys84. Residues 78–139 (GQQVAIKKIP…FRSVYVVLDL (62 aa)) form a required for binding to MAP2K5 region. Residues 140-406 (MESDLHQIIH…QQIRFQPSLQ (267 aa)) form a necessary for oligomerization region. Asp182 serves as the catalytic Proton acceptor. Residues 219-221 (TEY) carry the TXY motif. Positions 407-806 (PVASEPVCPD…LSDLPDLQEP (400 aa)) are may not be required for kinase activity; required to stimulate MEF2C activity. 2 disordered regions span residues 424-475 (APSG…SDNT) and 488-727 (RSRL…PKGS). Residues 433–443 (SPPPALPPCSG) are compositionally biased toward pro residues. 3 stretches are compositionally biased toward basic and acidic residues: residues 502 to 519 (PEPRKPVTAQERQREREE), 527 to 544 (RAKEREKRRQERERKERG), and 563 to 573 (DNDRSLLERWT). The Nuclear localization signal signature appears at 505–539 (RKPVTAQERQREREEKRRRRQERAKEREKRRQERE). Composition is skewed to pro residues over residues 578–592 (PPVPAPAPAPAPTPK) and 627–643 (VCPPPGPVPQPAGPVPA). Polar residues predominate over residues 647–660 (TAPSTSLLASQSLV). Over residues 678-689 (PSGPPPPDPGLT) the composition is skewed to pro residues. A compositionally biased stretch (polar residues) spans 693 to 710 (STSESPDVNLVTQQLSKS). Phosphoserine is present on Ser710. At Thr723 the chain carries Phosphothreonine.

It belongs to the protein kinase superfamily. CMGC Ser/Thr protein kinase family. MAP kinase subfamily. As to quaternary structure, interacts with MAP2K5. Forms oligomers. Interacts with MEF2A, MEF2C and MEF2D; the interaction phosphorylates the MEF2s and enhances transcriptional activity of MEF2A, MEF2C but not MEF2D. Interacts with SGK1. Interacts with PML. Interacts (via N-terminal half) with HSP90AB1-CDC37 chaperone complex in resting cells; the interaction is MAP2K5-independent and prevents MAPK7 from ubiquitination and proteasomal degradation. Interacts with STUB1/CHIP; the interaction is enhanced in the presence of IGF1 or MAP2K5 and promotes STUB1/CHIP E3 ligase activity. Mg(2+) is required as a cofactor. Dually phosphorylated on Thr-219 and Tyr-221, which activates the enzyme.

It localises to the cytoplasm. It is found in the nucleus. Its subcellular location is the PML body. It catalyses the reaction L-seryl-[protein] + ATP = O-phospho-L-seryl-[protein] + ADP + H(+). The catalysed reaction is L-threonyl-[protein] + ATP = O-phospho-L-threonyl-[protein] + ADP + H(+). Activated by tyrosine and threonine phosphorylation. Activated in response to hyperosmolarity, hydrogen peroxide, and epidermal growth factor (EGF). Functionally, plays a role in various cellular processes such as proliferation, differentiation and cell survival. The upstream activator of MAPK7 is the MAPK kinase MAP2K5. Upon activation, it translocates to the nucleus and phosphorylates various downstream targets including MEF2C. EGF activates MAPK7 through a Ras-independent and MAP2K5-dependent pathway. As part of the MAPK/ERK signaling pathway, acts as a negative regulator of apoptosis in cardiomyocytes via interaction with STUB1/CHIP and promotion of STUB1-mediated ubiquitination and degradation of ICER-type isoforms of CREM. May have a role in muscle cell differentiation. May be important for endothelial function and maintenance of blood vessel integrity. MAP2K5 and MAPK7 interact specifically with one another and not with MEK1/ERK1 or MEK2/ERK2 pathways. Phosphorylates SGK1 at Ser-78 and this is required for growth factor-induced cell cycle progression. Involved in the regulation of p53/TP53 by disrupting the PML-MDM2 interaction. The polypeptide is Mitogen-activated protein kinase 7 (Mapk7) (Rattus norvegicus (Rat)).